We begin with the raw amino-acid sequence, 315 residues long: Methionyl-tRNA formyltransferase (315 aa).

113–116 (SLLP) lines the (6S)-5,6,7,8-tetrahydrofolate pocket.

It belongs to the Fmt family.

The enzyme catalyses L-methionyl-tRNA(fMet) + (6R)-10-formyltetrahydrofolate = N-formyl-L-methionyl-tRNA(fMet) + (6S)-5,6,7,8-tetrahydrofolate + H(+). In terms of biological role, attaches a formyl group to the free amino group of methionyl-tRNA(fMet). The formyl group appears to play a dual role in the initiator identity of N-formylmethionyl-tRNA by promoting its recognition by IF2 and preventing the misappropriation of this tRNA by the elongation apparatus. The polypeptide is Methionyl-tRNA formyltransferase (Edwardsiella ictaluri (strain 93-146)).